A 313-amino-acid polypeptide reads, in one-letter code: Aspartate carbamoyltransferase catalytic subunit (313 aa).

Residues Arg-59 and Thr-60 each coordinate carbamoyl phosphate. Lys-87 provides a ligand contact to L-aspartate. Arg-109, His-137, and Gln-140 together coordinate carbamoyl phosphate. Positions 170 and 224 each coordinate L-aspartate. Positions 265 and 266 each coordinate carbamoyl phosphate.

This sequence belongs to the aspartate/ornithine carbamoyltransferase superfamily. ATCase family. Heterododecamer (2C3:3R2) of six catalytic PyrB chains organized as two trimers (C3), and six regulatory PyrI chains organized as three dimers (R2).

The enzyme catalyses carbamoyl phosphate + L-aspartate = N-carbamoyl-L-aspartate + phosphate + H(+). The protein operates within pyrimidine metabolism; UMP biosynthesis via de novo pathway; (S)-dihydroorotate from bicarbonate: step 2/3. Catalyzes the condensation of carbamoyl phosphate and aspartate to form carbamoyl aspartate and inorganic phosphate, the committed step in the de novo pyrimidine nucleotide biosynthesis pathway. This Sinorhizobium medicae (strain WSM419) (Ensifer medicae) protein is Aspartate carbamoyltransferase catalytic subunit.